The chain runs to 352 residues: MGSQEDIPVGIIGASGYGGVQLTRLLLEHPHVHLAYLGGDSSAGRPFADLYPHLGFKQDLKVEAIDLDKVVERTQVVFLALPNGLAAEMAPTLVECGCKVLDLSADYRFTNLDTYEDWYGTKRQDRDLASTAVYGLPELYRQGISTASLVGCPGCFPTASLLALAPLLKQGLIDPNSAIIDAKTGTSGGGRQAKTHLLLAEANGSIGPYGVAHHRHTPEIEQVSSDLAGREVVVQFTPHLAPMTRGILATVYATMRDPGLVREDLITIFSAFYRNSPWVKVLPGSTYPFTKWAYGTNLCYLGIEVDQRTGRVIVISAIDNLMKGQAGQAVQCLNLMMGWPETMGLPELTFYP.

C155 is an active-site residue.

It belongs to the NAGSA dehydrogenase family. Type 1 subfamily.

The protein resides in the cytoplasm. It carries out the reaction N-acetyl-L-glutamate 5-semialdehyde + phosphate + NADP(+) = N-acetyl-L-glutamyl 5-phosphate + NADPH + H(+). It functions in the pathway amino-acid biosynthesis; L-arginine biosynthesis; N(2)-acetyl-L-ornithine from L-glutamate: step 3/4. In terms of biological role, catalyzes the NADPH-dependent reduction of N-acetyl-5-glutamyl phosphate to yield N-acetyl-L-glutamate 5-semialdehyde. The protein is N-acetyl-gamma-glutamyl-phosphate reductase of Acaryochloris marina (strain MBIC 11017).